The following is a 103-amino-acid chain: Small ribosomal subunit protein uS10 (103 aa).

Belongs to the universal ribosomal protein uS10 family. Part of the 30S ribosomal subunit.

Functionally, involved in the binding of tRNA to the ribosomes. The protein is Small ribosomal subunit protein uS10 of Fusobacterium nucleatum subsp. nucleatum (strain ATCC 25586 / DSM 15643 / BCRC 10681 / CIP 101130 / JCM 8532 / KCTC 2640 / LMG 13131 / VPI 4355).